The chain runs to 344 residues: Aromatic amino acid aminotransferase (344 aa).

Lys-213 bears the N6-(pyridoxal phosphate)lysine mark.

The protein belongs to the class-II pyridoxal-phosphate-dependent aminotransferase family. Homodimer. Pyridoxal 5'-phosphate is required as a cofactor.

The catalysed reaction is an aromatic L-alpha-amino acid + 2-oxoglutarate = an aromatic oxo-acid + L-glutamate. Aminotransferase that catalyzes the conversion of aromatic amino acids and 2-oxoglutarate into corresponding aromatic oxo acids and L-glutamate. The protein is Aromatic amino acid aminotransferase of Corynebacterium diphtheriae (strain ATCC 700971 / NCTC 13129 / Biotype gravis).